We begin with the raw amino-acid sequence, 130 residues long: Small ribosomal subunit protein uS11c (130 aa).

This sequence belongs to the universal ribosomal protein uS11 family. Part of the 30S ribosomal subunit.

It is found in the plastid. The protein resides in the chloroplast. In Porphyra purpurea (Red seaweed), this protein is Small ribosomal subunit protein uS11c.